Reading from the N-terminus, the 332-residue chain is L-lactate dehydrogenase A chain (332 aa).

Residues 29–57 (GAVGMACAISILMKDLADELTLVDVVEDK) and arginine 99 each bind NAD(+). Residues arginine 106, asparagine 138, and arginine 169 each contribute to the substrate site. Asparagine 138 lines the NAD(+) pocket. Residue histidine 193 is the Proton acceptor of the active site. Threonine 248 is a substrate binding site.

It belongs to the LDH/MDH superfamily. LDH family. As to quaternary structure, homotetramer.

Its subcellular location is the cytoplasm. It carries out the reaction (S)-lactate + NAD(+) = pyruvate + NADH + H(+). It functions in the pathway fermentation; pyruvate fermentation to lactate; (S)-lactate from pyruvate: step 1/1. Functionally, interconverts simultaneously and stereospecifically pyruvate and lactate with concomitant interconversion of NADH and NAD(+). The protein is L-lactate dehydrogenase A chain (LDHA) of Gallus gallus (Chicken).